The following is a 183-amino-acid chain: Nucleosome assembly protein 1-like 5 (183 aa).

The interval 1-71 (MADSENQGPA…APKPKNDFIE (71 aa)) is disordered. Composition is skewed to low complexity over residues 7–21 (QGPA…AAEA) and 28–49 (AEGG…SAAG). Residues 81 to 107 (VLALKKLQKRCDKIEAKFDKEFQALEK) are a coiled coil. The segment covering 135-161 (EGEEEEEEEYEDDEEEGEEEEEEEEAA) has biased composition (acidic residues). The tract at residues 135–183 (EGEEEEEEEYEDDEEEGEEEEEEEEAAAEAAAGAKHDDAHAEMPDDAKK) is disordered. Positions 168–183 (AKHDDAHAEMPDDAKK) are enriched in basic and acidic residues.

This sequence belongs to the nucleosome assembly protein (NAP) family.

It is found in the nucleus. This chain is Nucleosome assembly protein 1-like 5 (NAP1L5), found in Pongo abelii (Sumatran orangutan).